Reading from the N-terminus, the 161-residue chain is Large ribosomal subunit protein uL15 (161 aa).

The interval 1 to 57 (MRLKDAIPKKGSQQRGRRVGRGISAGQGASCGKGMRGQKSRSGGSTRPGFEGGQNPL) is disordered. A compositionally biased stretch (gly residues) spans 23-35 (ISAGQGASCGKGM).

It belongs to the universal ribosomal protein uL15 family. As to quaternary structure, part of the 50S ribosomal subunit.

In terms of biological role, binds to the 23S rRNA. The sequence is that of Large ribosomal subunit protein uL15 from Trichodesmium erythraeum (strain IMS101).